An 81-amino-acid chain; its full sequence is Photosystem I iron-sulfur center (81 aa).

4Fe-4S ferredoxin-type domains follow at residues A2–W31 and I39–Y68. Residues C11, C14, C17, C21, C48, C51, C54, and C58 each coordinate [4Fe-4S] cluster.

In terms of assembly, the eukaryotic PSI reaction center is composed of at least 11 subunits. [4Fe-4S] cluster serves as cofactor.

The protein resides in the plastid. It localises to the chloroplast thylakoid membrane. The catalysed reaction is reduced [plastocyanin] + hnu + oxidized [2Fe-2S]-[ferredoxin] = oxidized [plastocyanin] + reduced [2Fe-2S]-[ferredoxin]. In terms of biological role, apoprotein for the two 4Fe-4S centers FA and FB of photosystem I (PSI); essential for photochemical activity. FB is the terminal electron acceptor of PSI, donating electrons to ferredoxin. The C-terminus interacts with PsaA/B/D and helps assemble the protein into the PSI complex. Required for binding of PsaD and PsaE to PSI. PSI is a plastocyanin-ferredoxin oxidoreductase, converting photonic excitation into a charge separation, which transfers an electron from the donor P700 chlorophyll pair to the spectroscopically characterized acceptors A0, A1, FX, FA and FB in turn. The chain is Photosystem I iron-sulfur center from Physcomitrium patens (Spreading-leaved earth moss).